A 59-amino-acid polypeptide reads, in one-letter code: UPF0509 protein KPN78578_12530 (59 aa).

Belongs to the UPF0509 family.

The polypeptide is UPF0509 protein KPN78578_12530 (Klebsiella pneumoniae subsp. pneumoniae (strain ATCC 700721 / MGH 78578)).